The sequence spans 273 residues: Large ribosomal subunit protein uL2cz/uL2cy (273 aa).

2 disordered regions span residues 1–22 (MAIH…DSQV) and 223–254 (MNPV…PALG).

This sequence belongs to the universal ribosomal protein uL2 family. As to quaternary structure, part of the 50S ribosomal subunit.

It localises to the plastid. The protein localises to the chloroplast. In Drimys granadensis, this protein is Large ribosomal subunit protein uL2cz/uL2cy (rpl2-A).